Reading from the N-terminus, the 594-residue chain is Glutamate decarboxylase 1 (594 aa).

Positions 1 to 13 (MASSTPSSSATSS) are enriched in low complexity. Residues 1–23 (MASSTPSSSATSSNAGADPNTTN) are disordered. A Phosphoserine modification is found at Ser-78. 190-192 (QLS) contacts 4-aminobutanoate. Lys-405 is modified (N6-(pyridoxal phosphate)lysine). A 4-aminobutanoate-binding site is contributed by Arg-567.

It belongs to the group II decarboxylase family. As to quaternary structure, homodimer. It depends on pyridoxal 5'-phosphate as a cofactor.

It catalyses the reaction L-glutamate + H(+) = 4-aminobutanoate + CO2. In terms of biological role, catalyzes the synthesis of the inhibitory neurotransmitter gamma-aminobutyric acid (GABA) with pyridoxal 5'-phosphate as cofactor. The protein is Glutamate decarboxylase 1 (GAD1) of Bos taurus (Bovine).